Here is a 1102-residue protein sequence, read N- to C-terminus: NSIVRKRIEISTNENRGQLVVSSDKYSLVDNLFYNLHDYASQSKHNIIIDDGKVEKLLNLICNVLDRNVNELNDSVFLIIKDIEKECKYYVSNVLYRSVGSRKNRGREVEWSSYKYNKEFNKVLDKGIISINNEVLKFISKEREGYIERVESIAVTVKNKILELNNNIAEVLLSIKNKVIVLNKESVVAKVEEINYEVHNKFIKGNGNTNFSNRNLTEIKSILKELNKMEILDNRINKLSTKESDLLKVIKEILDSNLIIEDKQLAIEKTVVEYELTFFRHNMDTHETRNKIIHNIYPKLNKAYTELLANYKLNRYSKIKKSIHLISNKSEGTKSKEMIKLIVVLVILYIGIDKCISYSFYQIINLLTNARDGTSRTNIAINLGFRIIKVLKYIKLDENPSLNALYPINKLKDEISKLDNEGIYWIGDTLLGLITANCDIVVEELKWNSGKDSQLEVRINDKFISNLTVSGINIVQLPMLTEPRKISSDGLYFPYINSDTTNLHLFEGELIKGKYNLRDHTEASEMLYSSINYLNSIKFKINKAMLNFILAEWDNKDSKLFKGYNMLKPILETDSKEIKEEKVSSNSKYTLYSNIISLASLYKDNEFYLPVYVDFRGRVYPLSNYISYQGGDLARSLILFADTKCVLNNSGKECLNVYLANLAGYDKLPWSERLTKVDGIIKEYLESNEISNTKYIEDNIDKISEPFQFISIMYAKLLSISNPKANISNPILFDASCSGIQHIAALTLEKELASNVNLYTDSSNPKEDYPQDFYTYALEKIRDKLINSDITELRDIKLNRKIIKRSVMTIPYNISMAGIGEHLMEHFTVKTVLKYRYVVIPGSATISSKDVYLDYSKYGQLCKIIYFVLTKELPSLRLLSNYFESMIDIFVKLNIPITWVTPSGLKIKYTNIKFKPQKVKTSVLNTSKITTIKLPTDSLDVLSTKRSFMPNFIHSLDASNVHLLLNSVSYKNLPVYTVHDCFASTANNMFKLEKLVKNAFINIYFNDEGYLLKLHKHFVDTIISATDPYLSNGNIENENDIKGLTTERLEYKPLLSSNYVADRISTKADIIKIPDLPAGYKNKNKNINEFVKGILNSKYFIG.

Active-site residues include Asp734, Lys804, and Asp980.

The protein belongs to the phage and mitochondrial RNA polymerase family.

Its subcellular location is the mitochondrion. It carries out the reaction RNA(n) + a ribonucleoside 5'-triphosphate = RNA(n+1) + diphosphate. In terms of biological role, DNA-dependent RNA polymerase catalyzes the transcription of DNA into RNA using the four ribonucleoside triphosphates as substrates. This chain is Probable DNA-directed RNA polymerase, found in Agaricus bitorquis (Pavement mushroom).